Consider the following 436-residue polypeptide: MRQALPLVTRQGDRIAIVSGLRTPFARQATAFHGIPAVDLGKMVVGELLARSEIPADAIEQLVFGQVVQMPEAPNIAREIVLGTGMNVHTDAYSVSRACATSFQAVANVAESLMAGTIRAGIAGGADSSSVLPIGVSKALARVLVDVNKARTTRQRLTLFSRLRLRDLLPVPPAVAEYSTGLRMGDTAEQMAKTYGITREQQDALAHRSHQRAAQAWAEGKLAEEVMTTYVPPYKNPFAEDNNIRGTSTLADYAKLRPAFDRKHGSVTAANSTPLTDGAAAVILMTESRAKELGLHPLGYLRSYAFTAIDVWQDMLLGPAWSTPLALERAGLTMADLTLFDMHEAFAAQTLANLQLLGSERFAREVLGRAQATGEVDDAKFNVLGGSIAYGHPFAATGARMITQTLHELRRRGGGFGLVTACAAGGLGAAMVLEAE.

The active-site Acyl-thioester intermediate is the C99. Catalysis depends on proton acceptor residues H392 and C422.

The protein belongs to the thiolase-like superfamily. Thiolase family. In terms of assembly, heterotetramer of two alpha chains (FadJ) and two beta chains (FadI).

It is found in the cytoplasm. It carries out the reaction an acyl-CoA + acetyl-CoA = a 3-oxoacyl-CoA + CoA. The protein operates within lipid metabolism; fatty acid beta-oxidation. Functionally, catalyzes the final step of fatty acid oxidation in which acetyl-CoA is released and the CoA ester of a fatty acid two carbons shorter is formed. This Salmonella schwarzengrund (strain CVM19633) protein is 3-ketoacyl-CoA thiolase.